The primary structure comprises 320 residues: MQTRKTFSWIKEQINRSISVSLMIYIITRPSISIAYPIFAQQGYENPREATGRIVCANCHLANKPVDIEVPQTVLPDTVFEAVVRIPYDMQLKQVLANGKRGTLNVGAVLILPEGFELAPADRISPEMKEKIGNLSFQSYRPNKKNILVIGPVPGQKYSEITFPILSPDPATTKEVHFLKYPIYVGGNRGRGQIYPDGSKSNNTVYNATSAGIVGKIIRKEKGGYEITIADASDGRQVVDIIPPGPELLVSEGESIKLDQPLTSNPNVGGFGQGDAEIVLQDPLRVQGLLFFLASVILAQIFLVLKKKQFEKVQLSEMNF.

A signal peptide spans 1 to 35; sequence MQTRKTFSWIKEQINRSISVSLMIYIITRPSISIA. Tyr-36, Cys-56, Cys-59, and His-60 together coordinate heme. Residues 286–306 traverse the membrane as a helical segment; it reads VQGLLFFLASVILAQIFLVLK.

It belongs to the cytochrome f family. The 4 large subunits of the cytochrome b6-f complex are cytochrome b6, subunit IV (17 kDa polypeptide, petD), cytochrome f and the Rieske protein, while the 4 small subunits are PetG, PetL, PetM and PetN. The complex functions as a dimer. The cofactor is heme.

The protein resides in the plastid. Its subcellular location is the chloroplast thylakoid membrane. Functionally, component of the cytochrome b6-f complex, which mediates electron transfer between photosystem II (PSII) and photosystem I (PSI), cyclic electron flow around PSI, and state transitions. The sequence is that of Cytochrome f from Daucus carota (Wild carrot).